Here is a 199-residue protein sequence, read N- to C-terminus: Protein ZNRD2 (199 aa).

Position 2 is an N-acetylalanine (Ala2). Zn(2+)-binding residues include Cys53, Cys56, Cys70, and Cys73. Residue Ser94 is modified to Phosphoserine. A disordered region spans residues 100-125; the sequence is QLASASELPLGSRPAPQPPVPRPEHC. The Nuclear export signal motif lies at 173-194; the sequence is SLETSIQLCGLIRACAEALRSL.

As to quaternary structure, homodimer. The cofactor is Zn(2+).

It is found in the cytoplasm. Might play a role in mitosis. Antigenic molecule. Could be a centromere-associated protein. May induce anti-centromere antibodies. The polypeptide is Protein ZNRD2 (Homo sapiens (Human)).